The primary structure comprises 267 residues: Inositol-1-monophosphatase (267 aa).

Mg(2+)-binding residues include Glu-66, Asp-84, Leu-86, and Asp-87. A substrate-binding site is contributed by Glu-66. Residues 86-89, Arg-182, and Asp-213 each bind substrate; that span reads LDGS. Position 213 (Asp-213) interacts with Mg(2+).

This sequence belongs to the inositol monophosphatase superfamily. It depends on Mg(2+) as a cofactor.

It carries out the reaction a myo-inositol phosphate + H2O = myo-inositol + phosphate. The protein is Inositol-1-monophosphatase (suhB) of Aeropyrum pernix (strain ATCC 700893 / DSM 11879 / JCM 9820 / NBRC 100138 / K1).